Reading from the N-terminus, the 242-residue chain is MRWKDEGVIIAVKKYGDKNLILSLFTKNHGKCRGLTRLTNNSNYKFQISNLLHAEWSAKLPENLGFLKCELIESPFHHFFQDRLKSIAIVSFSSILEKVLPESESCIKLYDNFRHFIDVIKHNSQFWQSHYLNLELLLLTQLGFKLDLSKCAVTGVKENLQFISPKTGRAVSKKVGDCYADKLLPFPQMLHDVYNNNLQNSYSYQEFRLGLKITGYFLNKYLFLQLNAKFPELRNFMLSFES.

Belongs to the RecO family.

Its function is as follows. Involved in DNA repair and RecF pathway recombination. In Wolbachia pipientis subsp. Culex pipiens (strain wPip), this protein is DNA repair protein RecO.